The chain runs to 434 residues: Sensor histidine kinase Hik2 (434 aa).

In terms of domain architecture, GAF spans 16–152 (ISLCQSQVRL…EAIAKSLAVA (137 aa)). A [3Fe-4S] cluster-binding site is contributed by Cys19. In terms of domain architecture, Histidine kinase spans 182–432 (DLLHQLRNPL…TFTLWLRSGE (251 aa)). At His185 the chain carries Phosphohistidine; by autocatalysis. The G1 box signature appears at 357-361 (DTGYG). Positions 386 to 390 (GTGLG) match the G2 box motif.

The protein belongs to the chloroplast sensor kinase protein family. Exists as monomers, tetramers, hexamers and other higher-order oligomers; all are able to autophosphorylate. Upon treatment with 0.5 M NaCl only tetramers are seen, which are probably inactive. Interacts with both RppA and Rre1. Requires [3Fe-4S] cluster as cofactor. Autophosphorylates, probably on His-185.

The protein resides in the cytoplasm. It catalyses the reaction ATP + protein L-histidine = ADP + protein N-phospho-L-histidine.. Its activity is regulated as follows. Autophosphorylation is inhibited by Na(+) but not by Cl(-). Reducing agents dithionite, duroquinol and decyl-plastoquinone, but not NADPH or ferredoxin inhibit autophosphorylation. Oxidation of the Fe-S cluster (with potassium ferricyanide) induces a conformational change that is conducive to its autophosphorylation activity. Member of possibly 2 two-component regulatory system(s) Hik2/Rre1 and Hik2/RppA. Transduces PQ (plastoquinone) redox signals to photosystem gene expression machinery during the adjustment of photosystem stoichiometry. Reduced PQ suppresses its autophosphorylation activity (i.e. kinase activity is higher under oxidizing conditions). Member of two-component regulatory system Hik2/Rre1, controls expression of sigB (sll0306), sll0528, slr1119, slr0852 and ssr3188 in response to hyperosmotic stress. Activity responds to high salt (with a linear response as concentrations rise to 0.5 M NaCl); detects Cl(-) levels. Autophosphorylates and transfers phosphate to Rre1. May transfer phosphate to RppA in a possible Hik2/RppA two-component system. This chain is Sensor histidine kinase Hik2, found in Synechocystis sp. (strain ATCC 27184 / PCC 6803 / Kazusa).